The sequence spans 261 residues: Cytochrome c oxidase subunit 3 (261 aa).

The Mitochondrial matrix portion of the chain corresponds to 1-15 (MTHQTHAYHMVNPSP). Residues 16 to 34 (WPLTGALSALLMTSGLAMW) traverse the membrane as a helical segment. Over 35–40 (FHFNST) the chain is Mitochondrial intermembrane. Residues 41 to 66 (ILLMIGLTTNTLTMYQWWRDVIREST) traverse the membrane as a helical segment. At 67-72 (FQGHHT) the chain is on the mitochondrial matrix side. A helical transmembrane segment spans residues 73–105 (PTVQKGLRYGMILFIISEVLFFTGFFWAFYHSS). The Mitochondrial intermembrane portion of the chain corresponds to 106 to 128 (LAPTPELGGCWPPTGIHPLNPLE). Residues 129–152 (VPLLNTSVLLASGVSITWAHHSLM) form a helical membrane-spanning segment. At 153–155 (EGN) the chain is on the mitochondrial matrix side. Residues 156 to 183 (RYPMLQALFITIALGVYFTLLQASEYYE) traverse the membrane as a helical segment. Topologically, residues 184 to 190 (APFTISD) are mitochondrial intermembrane. Residues 191 to 223 (GVYGSTFFVATGFHGLHVIIGSTFLIVCFFRQL) form a helical membrane-spanning segment. The Mitochondrial matrix portion of the chain corresponds to 224–232 (KFHFTSNHH). The helical transmembrane segment at 233–256 (FGFEAAAWYWHFVDVVWLFLYVSI) threads the bilayer. At 257–261 (YWWGS) the chain is on the mitochondrial intermembrane side.

Belongs to the cytochrome c oxidase subunit 3 family. In terms of assembly, component of the cytochrome c oxidase (complex IV, CIV), a multisubunit enzyme composed of 14 subunits. The complex is composed of a catalytic core of 3 subunits MT-CO1, MT-CO2 and MT-CO3, encoded in the mitochondrial DNA, and 11 supernumerary subunits COX4I, COX5A, COX5B, COX6A, COX6B, COX6C, COX7A, COX7B, COX7C, COX8 and NDUFA4, which are encoded in the nuclear genome. The complex exists as a monomer or a dimer and forms supercomplexes (SCs) in the inner mitochondrial membrane with NADH-ubiquinone oxidoreductase (complex I, CI) and ubiquinol-cytochrome c oxidoreductase (cytochrome b-c1 complex, complex III, CIII), resulting in different assemblies (supercomplex SCI(1)III(2)IV(1) and megacomplex MCI(2)III(2)IV(2)).

Its subcellular location is the mitochondrion inner membrane. The enzyme catalyses 4 Fe(II)-[cytochrome c] + O2 + 8 H(+)(in) = 4 Fe(III)-[cytochrome c] + 2 H2O + 4 H(+)(out). In terms of biological role, component of the cytochrome c oxidase, the last enzyme in the mitochondrial electron transport chain which drives oxidative phosphorylation. The respiratory chain contains 3 multisubunit complexes succinate dehydrogenase (complex II, CII), ubiquinol-cytochrome c oxidoreductase (cytochrome b-c1 complex, complex III, CIII) and cytochrome c oxidase (complex IV, CIV), that cooperate to transfer electrons derived from NADH and succinate to molecular oxygen, creating an electrochemical gradient over the inner membrane that drives transmembrane transport and the ATP synthase. Cytochrome c oxidase is the component of the respiratory chain that catalyzes the reduction of oxygen to water. Electrons originating from reduced cytochrome c in the intermembrane space (IMS) are transferred via the dinuclear copper A center (CU(A)) of subunit 2 and heme A of subunit 1 to the active site in subunit 1, a binuclear center (BNC) formed by heme A3 and copper B (CU(B)). The BNC reduces molecular oxygen to 2 water molecules using 4 electrons from cytochrome c in the IMS and 4 protons from the mitochondrial matrix. The sequence is that of Cytochrome c oxidase subunit 3 (MT-CO3) from Raphicerus campestris (Steenbok).